The chain runs to 509 residues: Maturase K (509 aa).

Belongs to the intron maturase 2 family. MatK subfamily.

The protein resides in the plastid. The protein localises to the chloroplast. Usually encoded in the trnK tRNA gene intron. Probably assists in splicing its own and other chloroplast group II introns. In Thujopsis dolabrata (Hiba arborvitae), this protein is Maturase K.